The primary structure comprises 192 residues: Shikimate kinase (192 aa).

26–31 serves as a coordination point for ATP; sequence ASGKSS. S30 contributes to the Mg(2+) binding site. Substrate is bound by residues D48, R72, and G94. Residue R132 participates in ATP binding. A substrate-binding site is contributed by R151.

This sequence belongs to the shikimate kinase family. Monomer. Mg(2+) is required as a cofactor.

It is found in the cytoplasm. The catalysed reaction is shikimate + ATP = 3-phosphoshikimate + ADP + H(+). The protein operates within metabolic intermediate biosynthesis; chorismate biosynthesis; chorismate from D-erythrose 4-phosphate and phosphoenolpyruvate: step 5/7. Catalyzes the specific phosphorylation of the 3-hydroxyl group of shikimic acid using ATP as a cosubstrate. The polypeptide is Shikimate kinase (Prochlorococcus marinus (strain MIT 9313)).